Here is a 466-residue protein sequence, read N- to C-terminus: Voltage-gated potassium channel regulatory subunit KCNG2 (466 aa).

Over 1–174 the chain is Cytoplasmic; sequence MEPWPCSPGG…DVVDNPHSGL (174 aa). The tract at residues 131–155 is disordered; sequence AEARAGPTERGAQGSPARALGPRGR. The chain crosses the membrane as a helical span at residues 175-196; it reads AGKLFACVSVSFVAVTAVGLCL. The Extracellular portion of the chain corresponds to 197 to 217; it reads STMPDIRAEEERGECSPKCRS. A helical transmembrane segment spans residues 218–239; that stretch reads LFVLETVCVAWFSFEFLLRSLQ. Residues 240-250 lie on the Cytoplasmic side of the membrane; sequence AESKCAFLRAP. The helical transmembrane segment at 251 to 271 threads the bilayer; the sequence is LNIIDILALLPFYVSLLLGLA. The Extracellular portion of the chain corresponds to 272 to 283; that stretch reads AGPGGTKLLERA. Residues 284-304 traverse the membrane as a helical; Voltage-sensor segment; sequence GLVLRLLRALRVLYVMRLARH. The Cytoplasmic portion of the chain corresponds to 305–319; the sequence is SLGLRSLGLTMRRCA. Residues 320–341 traverse the membrane as a helical segment; that stretch reads REFGLLLLFLCVAMALFAPLVH. Residues 342 to 356 lie on the Extracellular side of the membrane; that stretch reads LAERELGARRDFSSV. The segment at residues 357–368 is an intramembrane region (helical); sequence PASYWWAVISMT. The Selectivity filter signature appears at 369–374; the sequence is TVGYGD. Residues 369–376 lie within the membrane without spanning it; it reads TVGYGDMV. Residues 377 to 383 are Extracellular-facing; that stretch reads PRSLPGQ. Residues 384-412 traverse the membrane as a helical segment; sequence VVALSSILSGILLMAFPVTSIFHTFSRSY. Over 413-466 the chain is Cytoplasmic; sequence SELKEQQQRAASPEPALQEDSTHSATATEDSSQGPDSAGLADDSADALWVRAGR. Residues 416 to 466 are disordered; it reads KEQQQRAASPEPALQEDSTHSATATEDSSQGPDSAGLADDSADALWVRAGR. Residues 435–447 are compositionally biased toward polar residues; it reads HSATATEDSSQGP. The span at 448–460 shows a compositional bias: low complexity; it reads DSAGLADDSADAL.

Belongs to the potassium channel family. G (TC 1.A.1.2) subfamily. Kv6.2/KCNG2 sub-subfamily. Heterodimer with KCNB1. Highly expressed in heart, liver, skeletal muscle, kidney and pancreas. Detected at low levels in brain, lung and placenta.

It localises to the cell membrane. Its function is as follows. Regulatory alpha-subunit of the voltage-gated potassium (Kv) channel which, when coassembled with KCNB1, can modulate the kinetics and conductance-voltage relationship. Modulates channel activity by shifting the threshold and the half-maximal activation to more negative values. Potassium channel subunit that does not form functional channels by itself. This Homo sapiens (Human) protein is Voltage-gated potassium channel regulatory subunit KCNG2.